A 520-amino-acid chain; its full sequence is Nuclear GTP-binding protein NUG1 (520 aa).

Basic residues-rich tracts occupy residues 1-13 (MRVR…RTST) and 21-34 (KKAS…KKMA). The disordered stretch occupies residues 1–53 (MRVRKRQSRRTSTKLKEGIKKKASAHRKKEKKMAKKDVTWRSRSKKDPGIPSN). A compositionally biased stretch (basic and acidic residues) spans 35 to 48 (KKDVTWRSRSKKDP). Residues 165-343 (YDKIFKSVID…ILDSPGICFP (179 aa)) enclose the CP-type G domain. GTP is bound by residues 213–216 (NKVD), 287–294 (GYPNVGKS), and 336–339 (DSPG). A Phosphoserine modification is found at serine 337.

This sequence belongs to the TRAFAC class YlqF/YawG GTPase family.

The protein localises to the nucleus. GTPase required for 60S ribosomal subunit export to the cytoplasm. The polypeptide is Nuclear GTP-binding protein NUG1 (NUG1) (Saccharomyces cerevisiae (strain ATCC 204508 / S288c) (Baker's yeast)).